An 859-amino-acid chain; its full sequence is MRDYEFKEIEKKWQERWSKDNIFKTENQVEGKENYYVLSMLPYPSGKLHVGHARNYTIGDVISRYKRMKGYNVLQPMGWDSFGLPAENAAIQNGTHPAIWTKSNIENMRRQLKLMGFSYDWEREIASYTPEYYKWNQWLFKRMYEKGLIYKKKSLVNWCPDCQTVLANEQVEDGMCWRHSKTHVIQKELEQWFFKITDYADELLEGHEEIKDGWPEKVLTMQKNWIGKSFGTELKLKVVETGEDLPIFTTRIDTIYGVSYAVVAPEHPIVEKILKDNPSIKDKVTEMKNTDIIERGAEGREKNGIDSGWHIENPVNKEIVPLWIADYVLMNYGTGAVMGVPAHDERDFVFAGKYNLPVKQVITSKKSDEKVQLPYIEEGVMINSGEFNGLSSKDALVKIAEYVEEKGYGKRTYKYRLKDWGISRQRYWGTPIPALYCEKCGEVLEKDENLPVLLPDDIEFSGNGNPLETSNKFKEATCPCCGGKARRDTDTMDTFVDSSWYFLRYCDPKNLNLPFSKEIVDKWTPVDQYIGGVEHAVMHLLYARFFHKVLRDLGLLSSNEPFKRLLTQGMVLGPSYYSEKENKYLLQKAAIIKGDKAYSQSGEELQVKVEKMSKSKNNGVDPEEMLDKYGADTTRLFIMFAAPPEKELEWNENGLAGAYRFLTRVWRLVFENSELVKNANDEIDYNKLSKEDKTLLIKLNQTIKKVTDAIENNYHFNTAIAANMELINEVQTYVSSSMNSEQAAKILGYTLKKIIIMLSPFVPHFCDEIWEELGEKGYLFNEKWPEYDEKMLSSDETTIAVQVNGKVRGSFEIAKDSEQALVEKTALKLPNVAKHLEGMNVVKIIVIPNKIVNIVVKPQ.

The 'HIGH' region motif lies at 42–52 (PYPSGKLHVGH). The short motif at 611–615 (KMSKS) is the 'KMSKS' region element. K614 contributes to the ATP binding site.

Belongs to the class-I aminoacyl-tRNA synthetase family.

It localises to the cytoplasm. The catalysed reaction is tRNA(Leu) + L-leucine + ATP = L-leucyl-tRNA(Leu) + AMP + diphosphate. The chain is Leucine--tRNA ligase from Fusobacterium nucleatum subsp. nucleatum (strain ATCC 25586 / DSM 15643 / BCRC 10681 / CIP 101130 / JCM 8532 / KCTC 2640 / LMG 13131 / VPI 4355).